The chain runs to 441 residues: Methionine gamma-lyase (441 aa).

The tract at residues 1–25 (MAHFLETQEPLVFSGKKRNDRDDED) is disordered. Position 248 is an N6-(pyridoxal phosphate)lysine (K248).

Belongs to the trans-sulfuration enzymes family. Homotetramer. It depends on pyridoxal 5'-phosphate as a cofactor. In terms of tissue distribution, expressed in roots, stems, siliques, leaves, flowers and seeds after imbibition (at protein level). Transcripts accumulate in dry mature seeds, but at protein level, only present upon imbibition.

It is found in the cytoplasm. The catalysed reaction is L-methionine + H2O = methanethiol + 2-oxobutanoate + NH4(+). In terms of biological role, catalyzes the degradation of L-methionine to alpha-ketobutyrate, methanethiol and ammonia. Exhibits a high activity toward L-methionine, L-ethionine, L-homocysteine and seleno-L-methionine, but not L-cysteine. Involved in an alternative cysteine biosynthesis pathway to the reverse trans-sulfuration pathway (methionine-&gt;homocysteine-&gt;cystathionine-&gt;cysteine) in which methanethiol is an intermediate. Also mediates an alternative isoleucine biosynthesis pathway in which 2-ketobutyrate is an intermediate. The protein is Methionine gamma-lyase (MGL) of Arabidopsis thaliana (Mouse-ear cress).